A 1362-amino-acid polypeptide reads, in one-letter code: Bromodomain-containing protein 4 (1362 aa).

The interval 1 to 58 (MSAESGPGTRLRNLPVMGDGLETSQMSTTQAQAQPQPANAASTNPPPPETSNPNKPKR) is disordered. Positions 23 to 43 (TSQMSTTQAQAQPQPANAAST) are enriched in low complexity. Residues 58 to 164 (RQTNQLQYLL…KLFLQKINEL (107 aa)) enclose the Bromo 1 domain. Lysine 99 is covalently cross-linked (Glycyl lysine isopeptide (Lys-Gly) (interchain with G-Cter in SUMO2)). 3 disordered regions span residues 174–229 (VQAK…PAVT), 242–352 (VPPQ…KVSE), and 463–615 (EPVV…YEEK). The span at 197–211 (PNTTQASTPPQTQTP) shows a compositional bias: low complexity. 2 stretches are compositionally biased toward pro residues: residues 212-227 (QPNP…PFPA) and 243-266 (PPQP…PAPQ). Positions 320–336 (QRRESSRPVKPPKKDVP) are enriched in basic and acidic residues. The Bromo 2 domain maps to 348–457 (SKVSEQLKCC…DVFEMRFAKM (110 aa)). Serine 470 bears the Phosphoserine mark. The span at 478–497 (KVVAPPSSSDSSSDSSSDSD) shows a compositional bias: low complexity. A phosphoserine; by CK2 mark is found at serine 484, serine 488, serine 492, serine 494, serine 498, serine 499, and serine 503. The NPS region stretch occupies residues 484–503 (SSSDSSSDSSSDSDSSTDDS). Residues 524–579 (QLAALSQPQQNKPKKKEKDKKEKKKEKHKRKEEVEENKKSKAKEPPPKKTKKNNSS) form a BID region region. Residues 535 to 553 (KPKKKEKDKKEKKKEKHKR) show a composition bias toward basic residues. Residues 554–570 (KEEVEENKKSKAKEPPP) show a composition bias toward basic and acidic residues. Lysine 585 participates in a covalent cross-link: Glycyl lysine isopeptide (Lys-Gly) (interchain with G-Cter in SUMO2). Residues 600 to 682 (ESEEEDKCKP…SCLRKKRKPQ (83 aa)) enclose the NET domain. Phosphoserine is present on serine 601. Over residues 605–615 (DKCKPMSYEEK) the composition is skewed to basic and acidic residues. Residues lysine 645 and lysine 694 each participate in a glycyl lysine isopeptide (Lys-Gly) (interchain with G-Cter in SUMO2) cross-link. Residues 674-1100 (CLRKKRKPQA…PKKQELRAAS (427 aa)) are disordered. Over residues 699 to 712 (SSSESESSSESSSS) the composition is skewed to low complexity. Residues 724–744 (KSKKKGHPGREQKKHHHHHHQ) show a composition bias toward basic residues. Pro residues-rich tracts occupy residues 751 to 785 (APVP…PPSM), 833 to 846 (PELP…PEHS), and 881 to 890 (PPKPARPPAV). Residues 926-936 (MQMQLYLQQLQ) are compositionally biased toward low complexity. Pro residues-rich tracts occupy residues 953–964 (QPPPPLPPPPHP), 973–996 (QPPP…PPRP), and 1010–1034 (QPPP…PQPA). Residues 1041–1050 (QHHHSPRHHK) are compositionally biased toward basic residues. The segment at 1047–1362 (RHHKSDPYST…LLSIFEENLF (316 aa)) is C-terminal (CTD) region. Lysine 1050 is covalently cross-linked (Glycyl lysine isopeptide (Lys-Gly) (interchain with G-Cter in SUMO2)). Over residues 1071–1091 (PQMSQFQSLTHQSPPQQNVQP) the composition is skewed to polar residues. The residue at position 1111 (lysine 1111) is an N6-acetyllysine; alternate. Residue lysine 1111 forms a Glycyl lysine isopeptide (Lys-Gly) (interchain with G-Cter in SUMO1); alternate linkage. Lysine 1111 is covalently cross-linked (Glycyl lysine isopeptide (Lys-Gly) (interchain with G-Cter in SUMO2); alternate). Residues 1116–1339 (HSPIIRSEPF…KREQERRRRE (224 aa)) are disordered. Phosphoserine is present on residues serine 1117 and serine 1126. Positions 1175 to 1196 (PDKDKQKQEPKTPVAPKKDLKI) are enriched in basic and acidic residues. Lysine 1197 participates in a covalent cross-link: Glycyl lysine isopeptide (Lys-Gly) (interchain with G-Cter in SUMO2). Phosphoserine occurs at positions 1201 and 1204. Residues 1211–1223 (TTPSSTAKSSSDS) show a composition bias toward low complexity. Positions 1225-1284 (EQFRRAAREKEEREKALKAQAEHAEKEKERLRQERMRSREDEDALEQARRAHEEARRRQE) are enriched in basic and acidic residues. Residues 1285-1313 (QQQQQRQEQQQQQQQQAAAVAAAATPQAQ) show a composition bias toward low complexity. A compositionally biased stretch (basic and acidic residues) spans 1323 to 1339 (QQRELARKREQERRRRE).

Belongs to the BET family. Interacts with p53/TP53; the interaction is direct. Interacts (via CTD region) with CDK9 and CCNT1, acting as an associated component of P-TEFb complex. Interacts with RELA (when acetylated at 'Lys-310'). Interacts (via NET domain) with NSD3, CHD4, BICRA and ATAD5. The interaction with BICRA bridges BRD4 to the GBAF complex. Interacts (via NET domain) with JMJD6 (via JmjC and N-terminal domains); the interaction is stronger in presence of ssRNA and recruits JMJD6 on distal enhancers. Interacts with NSD3. Interacts with NIPBL. In terms of assembly, interacts with SMC2. Interacts with NCAPD3. As to quaternary structure, (Microbial infection) Interacts with bovine papillomavirus type 1 regulatory protein E2. This interactions may serve for the tethering of viral genomes to host mitotic chromosomes allowing successful partitioning of the viral genome during cell division. (Microbial infection) Interacts with Epstein-Barr virus (EBV) protein EBNA1; this interaction facilitates transcriptional activation by EBNA1. In terms of assembly, (Microbial infection) Interacts with human herpes virus-8 (HHV-8) protein LANA. In terms of processing, phosphorylation by CK2 disrupt the intramolecular binding between the bromo domain 2 and the NPS region and promotes binding between the NPS and the BID regions, leading to activate the protein and promote binding to acetylated histones. In absence of phosphorylation, BRD4 does not localize to p53/TP53 target gene promoters, phosphorylation promoting recruitment to p53/TP53 target promoters. In terms of tissue distribution, ubiquitously expressed.

It localises to the nucleus. It is found in the chromosome. Inhibited by JQ1, a thieno-triazolo-1,4-diazepine derivative, which specifically inhibits members of the BET family (BRD2, BRD3 and BRD4). The first bromo domain is inhibited by GSK778 (iBET-BD1), which specifically inhibits the first bromo domain of members of the BET family (BRD2, BRD3 and BRD4). The second bromo domain is inhibited by ABBV-744, which specifically inhibits the second bromo domain of members of the BET family (BRD2, BRD3 and BRD4). The second bromo domain is inhibited by GSK046 (iBET-BD2), which specifically inhibits the second bromo domain of members of the BET family (BRD2, BRD3 and BRD4). Chromatin reader protein that recognizes and binds acetylated histones and plays a key role in transmission of epigenetic memory across cell divisions and transcription regulation. Remains associated with acetylated chromatin throughout the entire cell cycle and provides epigenetic memory for postmitotic G1 gene transcription by preserving acetylated chromatin status and maintaining high-order chromatin structure. During interphase, plays a key role in regulating the transcription of signal-inducible genes by associating with the P-TEFb complex and recruiting it to promoters. Also recruits P-TEFb complex to distal enhancers, so called anti-pause enhancers in collaboration with JMJD6. BRD4 and JMJD6 are required to form the transcriptionally active P-TEFb complex by displacing negative regulators such as HEXIM1 and 7SKsnRNA complex from P-TEFb, thereby transforming it into an active form that can then phosphorylate the C-terminal domain (CTD) of RNA polymerase II. Regulates differentiation of naive CD4(+) T-cells into T-helper Th17 by promoting recruitment of P-TEFb to promoters. Promotes phosphorylation of 'Ser-2' of the C-terminal domain (CTD) of RNA polymerase II. According to a report, directly acts as an atypical protein kinase and mediates phosphorylation of 'Ser-2' of the C-terminal domain (CTD) of RNA polymerase II; these data however need additional evidences in vivo. In addition to acetylated histones, also recognizes and binds acetylated RELA, leading to further recruitment of the P-TEFb complex and subsequent activation of NF-kappa-B. Also acts as a regulator of p53/TP53-mediated transcription: following phosphorylation by CK2, recruited to p53/TP53 specific target promoters. In terms of biological role, acts as a chromatin insulator in the DNA damage response pathway. Inhibits DNA damage response signaling by recruiting the condensin-2 complex to acetylated histones, leading to chromatin structure remodeling, insulating the region from DNA damage response by limiting spreading of histone H2AX/H2A.x phosphorylation. The sequence is that of Bromodomain-containing protein 4 (BRD4) from Homo sapiens (Human).